Here is a 432-residue protein sequence, read N- to C-terminus: Glutamate-1-semialdehyde 2,1-aminomutase (432 aa).

Residue K267 is modified to N6-(pyridoxal phosphate)lysine.

It belongs to the class-III pyridoxal-phosphate-dependent aminotransferase family. HemL subfamily. Homodimer. It depends on pyridoxal 5'-phosphate as a cofactor.

It localises to the cytoplasm. It catalyses the reaction (S)-4-amino-5-oxopentanoate = 5-aminolevulinate. Its pathway is porphyrin-containing compound metabolism; protoporphyrin-IX biosynthesis; 5-aminolevulinate from L-glutamyl-tRNA(Glu): step 2/2. The sequence is that of Glutamate-1-semialdehyde 2,1-aminomutase from Rhodococcus erythropolis (strain PR4 / NBRC 100887).